The primary structure comprises 307 residues: Ornithine carbamoyltransferase (307 aa).

Residues 51–54 (STRT), Q78, R102, and 129–132 (HPVQ) each bind carbamoyl phosphate. L-ornithine contacts are provided by residues N159, D223, and 227–228 (SM). Residues 263 to 264 (CL) and R291 contribute to the carbamoyl phosphate site.

It belongs to the aspartate/ornithine carbamoyltransferase superfamily. OTCase family.

The protein resides in the cytoplasm. It carries out the reaction carbamoyl phosphate + L-ornithine = L-citrulline + phosphate + H(+). It functions in the pathway amino-acid biosynthesis; L-arginine biosynthesis; L-arginine from L-ornithine and carbamoyl phosphate: step 1/3. Reversibly catalyzes the transfer of the carbamoyl group from carbamoyl phosphate (CP) to the N(epsilon) atom of ornithine (ORN) to produce L-citrulline. This is Ornithine carbamoyltransferase from Wolinella succinogenes (strain ATCC 29543 / DSM 1740 / CCUG 13145 / JCM 31913 / LMG 7466 / NCTC 11488 / FDC 602W) (Vibrio succinogenes).